The following is a 792-amino-acid chain: Glucocorticoid receptor (792 aa).

The span at 1–15 shows a compositional bias: basic and acidic residues; the sequence is MDSKESLAPPGRDEV. Residues 1–25 are disordered; it reads MDSKESLAPPGRDEVPSSLLGRGRG. The tract at residues 1–436 is modulating; sequence MDSKESLAPP…STATGPPPKL (436 aa). Arginine 24 carries the omega-N-methylarginine modification. Serine 46 bears the Phosphoserine mark. The segment at 67–98 is disordered; sequence SKGSASNAQQQQQQQQQQQQQQQQQPQPDLSK. Residues 75–94 are compositionally biased toward low complexity; it reads QQQQQQQQQQQQQQQQQPQP. Phosphoserine is present on residues serine 131, serine 152, and serine 159. Polar residues predominate over residues 148-162; it reads NRSTSRPENPKSSTP. A disordered region spans residues 148-201; it reads NRSTSRPENPKSSTPAAGCATPTEKEFPQTHSDPSSEQQNRKSQPGTNGGSVKL. The residue at position 168 (threonine 168) is a Phosphothreonine. A compositionally biased stretch (polar residues) spans 176-193; sequence QTHSDPSSEQQNRKSQPG. Phosphoserine is present on residues serine 221, serine 229, serine 243, and serine 284. Glycyl lysine isopeptide (Lys-Gly) (interchain with G-Cter in SUMO); alternate cross-links involve residues lysine 294 and lysine 310. Glycyl lysine isopeptide (Lys-Gly) (interchain with G-Cter in SUMO2); alternate cross-links involve residues lysine 294 and lysine 310. A phosphoserine mark is found at serine 324 and serine 421. A DNA-binding region (nuclear receptor) is located at residues 434-509; it reads PKLCLVCSDE…AGMNLEARKT (76 aa). Lysine 435 participates in a covalent cross-link: Glycyl lysine isopeptide (Lys-Gly) (interchain with G-Cter in ubiquitin). 2 consecutive NR C4-type zinc fingers follow at residues 437–457 and 473–497; these read CLVC…CGSC and CAGR…YRKC. An N6-acetyllysine mark is found at lysine 496, lysine 508, lysine 510, and lysine 511. Residues 501–792 are interaction with CLOCK; it reads GMNLEARKTK…NIKKLLFHQK (292 aa). Positions 503–538 are hinge; it reads NLEARKTKKKIKGIQQATAGVSQDTSENANKTIVPA. In terms of domain architecture, NR LBD spans 539–773; sequence ALPQLTPTLV…FPEMLAEIIT (235 aa). Residues 547–712 form an interaction with CRY1 region; that stretch reads LVSLLEVIEP…EIRMTYIKEL (166 aa). Residue lysine 718 forms a Glycyl lysine isopeptide (Lys-Gly) (interchain with G-Cter in SUMO) linkage.

It belongs to the nuclear hormone receptor family. NR3 subfamily. Heteromultimeric cytoplasmic complex with HSP90AA1, HSPA1A/HSPA1B, and FKBP5 or another immunophilin such as PPID, STIP1, or the immunophilin homolog PPP5C. Upon ligand binding FKBP5 dissociates from the complex and FKBP4 takes its place, thereby linking the complex to dynein and mediating transport to the nucleus, where the complex dissociates. Probably forms a complex composed of chaperones HSP90 and HSP70, co-chaperones CDC37, PPP5C, TSC1 and client protein TSC2, CDK4, AKT, RAF1 and NR3C1; this complex does not contain co-chaperones STIP1/HOP and PTGES3/p23. Directly interacts with UNC45A. Binds to DNA as a homodimer, and as heterodimer with NR3C2 or the retinoid X receptor. Binds STAT5A and STAT5B homodimers and heterodimers. Interacts with NRIP1, POU2F1, POU2F2 and TRIM28. Interacts with several coactivator complexes, including the SMARCA4 complex, CREBBP/EP300, TADA2L (Ada complex) and p160 coactivators such as NCOA2 and NCOA6. Interaction with BAG1 inhibits transactivation. Interacts with HEXIM1 and TGFB1I1. Interacts with NCOA1. Interacts with NCOA3, SMARCA4, SMARCC1, SMARCD1, and SMARCE1. Interacts with CLOCK, CRY1 and CRY2 in a ligand-dependent fashion. Interacts with CIART. Interacts with RWDD3. Interacts with UBE2I/UBC9 and this interaction is enhanced in the presence of RWDD3. Interacts with GRIP1. Interacts with NR4A3 (via nuclear receptor DNA-binding domain), represses transcription activity of NR4A3 on the POMC promoter Nur response element (NurRE). Directly interacts with PNRC2 to attract and form a complex with UPF1 and DCP1A; the interaction leads to rapid mRNA degradation. Interacts with GSK3B. Interacts with FNIP1 and FNIP2. Interacts (via C-terminus) with HNRNPU (via C-terminus). Interacts with MCM3AP. Interacts (via domain NR LBD) with HSP90AA1 and HSP90AB1. In the absence of hormonal ligand, interacts with TACC1. Interacts (via NR LBD domain) with ZNF764 (via KRAB domain); the interaction regulates transcription factor activity of NR3C1 by directing its actions toward certain biologic pathways. Acetylation by CLOCK reduces its binding to glucocorticoid response elements and its transcriptional activity. Post-translationally, increased proteasome-mediated degradation in response to glucocorticoids. In terms of processing, phosphorylated in the absence of hormone; becomes hyperphosphorylated in the presence of glucocorticoids. Phosphorylated in the absence of hormone; becomes hyperphosphorylated in the presence of glucocorticoid. The Ser-221, Ser-243 and Ser-421-phosphorylated forms are mainly cytoplasmic, and the Ser-229-phosphorylated form is nuclear. Phosphorylation at Ser-229 increases transcriptional activity. Phosphorylation at Ser-221, Ser-243 and Ser-421 decreases signaling capacity. Phosphorylation at Ser-421 may protect from glucocorticoid-induced apoptosis. Phosphorylation at Ser-221 and Ser-229 is not required in regulation of chromosome segregation. May be dephosphorylated by PPP5C, attenuates NR3C1 action. Sumoylation at Lys-294 and Lys-310 negatively regulates its transcriptional activity. Sumoylation at Lys-718 positively regulates its transcriptional activity in the presence of RWDD3. Sumoylation at Lys-294 and Lys-310 is dispensable whereas sumoylation at Lys-718 is critical for the stimulatory effect of RWDD3 on its transcriptional activity. Heat shock increases sumoylation in a RWDD3-dependent manner. Post-translationally, ubiquitinated. Ubiquitination by UBR5 leads to its degradation: UBR5 specifically recognizes and binds ligand-bound NR3C1 when it is not associated with coactivators (NCOAs). In presence of NCOAs, the UBR5-degron is not accessible, preventing its ubiquitination and degradation. In terms of tissue distribution, expressed in spleen, kidney and liver. Expressed in a circadian manner in the liver. As to expression, expressed at highest level in spleen with lesser amounts in kidney and liver.

Its subcellular location is the cytoplasm. The protein resides in the nucleus. It localises to the mitochondrion. The protein localises to the cytoskeleton. It is found in the spindle. Its subcellular location is the microtubule organizing center. The protein resides in the centrosome. It localises to the chromosome. The protein localises to the nucleoplasm. Its function is as follows. Receptor for glucocorticoids (GC). Has a dual mode of action: as a transcription factor that binds to glucocorticoid response elements (GRE), both for nuclear and mitochondrial DNA, and as a modulator of other transcription factors. Affects inflammatory responses, cellular proliferation and differentiation in target tissues. Involved in chromatin remodeling. Plays a role in rapid mRNA degradation by binding to the 5' UTR of target mRNAs and interacting with PNRC2 in a ligand-dependent manner which recruits the RNA helicase UPF1 and the mRNA-decapping enzyme DCP1A, leading to RNA decay. Could act as a coactivator for STAT5-dependent transcription upon growth hormone (GH) stimulation and could reveal an essential role of hepatic GR in the control of body growth. In terms of biological role, has transcriptional activation and repression activity. Mediates glucocorticoid-induced apoptosis. Promotes accurate chromosome segregation during mitosis. May act as a tumor suppressor. May play a negative role in adipogenesis through the regulation of lipolytic and antilipogenic gene expression. Acts as a dominant negative inhibitor of isoform 1. Has intrinsic transcriptional activity independent of isoform Alpha when both isoforms are coexpressed. Loses this transcription modulator function on its own. Has no hormone-binding activity. May play a role in controlling glucose metabolism by maintaining insulin sensitivity. Reduces hepatic gluconeogenesis through down-regulation of PEPCK in an isoform Alpha-dependent manner. Directly regulates STAT1 expression in isoform Alpha-independent manner. This is Glucocorticoid receptor (Nr3c1) from Mus musculus (Mouse).